The chain runs to 487 residues: Pentatricopeptide repeat-containing protein At5g61370, mitochondrial (487 aa).

The transit peptide at 1–90 (MMSTTVRLNR…TSPRRLLRFF (90 aa)) directs the protein to the mitochondrion. PPR repeat units lie at residues 137 to 171 (DKQT…SCPQ), 172 to 202 (DGFT…HKDV), 207 to 241 (ELSV…GITP), 242 to 283 (DLFC…KIQP), 284 to 318 (TSMS…GCDP), 319 to 353 (DTGS…GFRP), 354 to 388 (ERKF…SVGG), and 389 to 423 (YGQV…DVTL). Positions 466-487 (TKPKLKLKPKRRSKTKKKNLQH) are disordered.

Belongs to the PPR family. P subfamily.

It localises to the mitochondrion. This is Pentatricopeptide repeat-containing protein At5g61370, mitochondrial from Arabidopsis thaliana (Mouse-ear cress).